Consider the following 375-residue polypeptide: Probable cytochrome c oxidase subunit 2 (375 aa).

Transmembrane regions (helical) follow at residues 36 to 56 (LAVSLGITAMLVSGCSIDNVW), 80 to 100 (IIAALAMGVLVWGLTFWTVVF), and 122 to 142 (LTYTAIPFVIIAVLFYFTVVV). Cu cation is bound by residues H264, C305, C309, and H313. Polar residues predominate over residues 353-363 (VATSTRPFNTD). The disordered stretch occupies residues 353–375 (VATSTRPFNTDRTVKSAAAPEAE).

The protein belongs to the cytochrome c oxidase subunit 2 family. Requires Cu cation as cofactor. Heme serves as cofactor.

It localises to the cell membrane. The catalysed reaction is 4 Fe(II)-[cytochrome c] + O2 + 8 H(+)(in) = 4 Fe(III)-[cytochrome c] + 2 H2O + 4 H(+)(out). Its function is as follows. Subunits I and II form the functional core of the enzyme complex. Electrons originating in cytochrome c are transferred via heme a and Cu(A) to the binuclear center formed by heme a3 and Cu(B). The protein is Probable cytochrome c oxidase subunit 2 (ctaC) of Nocardia farcinica (strain IFM 10152).